A 161-amino-acid polypeptide reads, in one-letter code: 6,7-dimethyl-8-ribityllumazine synthase (161 aa).

5-amino-6-(D-ribitylamino)uracil is bound by residues Trp31, 63 to 65, and 85 to 87; these read SFE and VVI. 90–91 contributes to the (2S)-2-hydroxy-3-oxobutyl phosphate binding site; sequence GT. Catalysis depends on His93, which acts as the Proton donor. Phe118 serves as a coordination point for 5-amino-6-(D-ribitylamino)uracil. Residue Arg132 coordinates (2S)-2-hydroxy-3-oxobutyl phosphate.

The protein belongs to the DMRL synthase family.

It carries out the reaction (2S)-2-hydroxy-3-oxobutyl phosphate + 5-amino-6-(D-ribitylamino)uracil = 6,7-dimethyl-8-(1-D-ribityl)lumazine + phosphate + 2 H2O + H(+). The protein operates within cofactor biosynthesis; riboflavin biosynthesis; riboflavin from 2-hydroxy-3-oxobutyl phosphate and 5-amino-6-(D-ribitylamino)uracil: step 1/2. Functionally, catalyzes the formation of 6,7-dimethyl-8-ribityllumazine by condensation of 5-amino-6-(D-ribitylamino)uracil with 3,4-dihydroxy-2-butanone 4-phosphate. This is the penultimate step in the biosynthesis of riboflavin. In Paenarthrobacter aurescens (strain TC1), this protein is 6,7-dimethyl-8-ribityllumazine synthase.